Consider the following 145-residue polypeptide: uncharacterized protein (145 aa).

Residues 1–23 (MSSSNLSSRKTRISAHFLDAAPA) form the signal peptide. The helical transmembrane segment at 123–140 (VLLLIIALVFLLFVAIFI) threads the bilayer.

Its subcellular location is the membrane. This is an uncharacterized protein from Archaeoglobus fulgidus (strain ATCC 49558 / DSM 4304 / JCM 9628 / NBRC 100126 / VC-16).